The following is a 313-amino-acid chain: Calcyphosin-2 (313 aa).

3 consecutive EF-hand domains span residues 144-179 (RILTGLGKYFQQLDKEGNGLLDKADFKQALKVFHLE), 180-215 (VSEKDFESAWLILDDNGNGKVDYGEFKRGIIGEMNE), and 216-251 (YRKSYVRKAFMKLDFNKTGSVPITNIRKCYCAKKHS). Asp193, Asn195, Asn197, Lys199, and Glu204 together coordinate Ca(2+).

This is Calcyphosin-2 (CAPS2) from Macaca fascicularis (Crab-eating macaque).